Consider the following 272-residue polypeptide: 3-methyl-2-oxobutanoate hydroxymethyltransferase (272 aa).

Mg(2+) contacts are provided by aspartate 52 and aspartate 91. 3-methyl-2-oxobutanoate is bound by residues 52-53, aspartate 91, and lysine 121; that span reads DS. Glutamate 123 lines the Mg(2+) pocket. The Proton acceptor role is filled by glutamate 190.

The protein belongs to the PanB family. Homodecamer; pentamer of dimers. The cofactor is Mg(2+).

The protein resides in the cytoplasm. The enzyme catalyses 3-methyl-2-oxobutanoate + (6R)-5,10-methylene-5,6,7,8-tetrahydrofolate + H2O = 2-dehydropantoate + (6S)-5,6,7,8-tetrahydrofolate. It functions in the pathway cofactor biosynthesis; (R)-pantothenate biosynthesis; (R)-pantoate from 3-methyl-2-oxobutanoate: step 1/2. Functionally, catalyzes the reversible reaction in which hydroxymethyl group from 5,10-methylenetetrahydrofolate is transferred onto alpha-ketoisovalerate to form ketopantoate. The sequence is that of 3-methyl-2-oxobutanoate hydroxymethyltransferase from Christiangramia forsetii (strain DSM 17595 / CGMCC 1.15422 / KT0803) (Gramella forsetii).